The primary structure comprises 101 residues: Large ribosomal subunit protein bL28 (101 aa).

It belongs to the bacterial ribosomal protein bL28 family.

This Methylorubrum populi (strain ATCC BAA-705 / NCIMB 13946 / BJ001) (Methylobacterium populi) protein is Large ribosomal subunit protein bL28.